We begin with the raw amino-acid sequence, 1136 residues long: Nuclear pore complex protein Nup133 (1136 aa).

The tract at residues 1–26 (MFSPRGTPGSGRRQAPRTGGRRSVSA) is disordered.

It belongs to the nucleoporin Nup133 family. Forms part of the Nup160 subcomplex in the nuclear pore which is composed of NUP160, NUP133, NUP107 and Nup96. This complex plays a role in RNA export and in tethering Nup98 and NUP153 to the nucleus. In terms of tissue distribution, widely expressed in the embryo and in adult tissues. Higher expression is observed in the brain, testes, ovary, skin, and kidney.

It is found in the nucleus. Its subcellular location is the nuclear pore complex. The protein localises to the chromosome. It localises to the centromere. The protein resides in the kinetochore. Involved in poly(A)+ RNA transport. Involved in nephrogenesis. The chain is Nuclear pore complex protein Nup133 from Danio rerio (Zebrafish).